We begin with the raw amino-acid sequence, 447 residues long: Chromosomal replication initiator protein DnaA (447 aa).

The segment at 1–74 (MPDVESFWHS…TGFKLTGAEV (74 aa)) is domain I, interacts with DnaA modulators. The tract at residues 74–109 (VMPHFVVADEKDAALAQELEEPAEEEVVFSEQSKKA) is domain II. The interval 110–326 (MLNPKYTFDT…GALVRVQAFA (217 aa)) is domain III, AAA+ region. 4 residues coordinate ATP: Gly-154, Gly-156, Lys-157, and Thr-158. Residues 327–447 (TINGEDITTS…VSEIKNLLNS (121 aa)) form a domain IV, binds dsDNA region.

It belongs to the DnaA family. Oligomerizes as a right-handed, spiral filament on DNA at oriC.

The protein resides in the cytoplasm. In terms of biological role, plays an essential role in the initiation and regulation of chromosomal replication. ATP-DnaA binds to the origin of replication (oriC) to initiate formation of the DNA replication initiation complex once per cell cycle. Binds the DnaA box (a 9 base pair repeat at the origin) and separates the double-stranded (ds)DNA. Forms a right-handed helical filament on oriC DNA; dsDNA binds to the exterior of the filament while single-stranded (ss)DNA is stabiized in the filament's interior. The ATP-DnaA-oriC complex binds and stabilizes one strand of the AT-rich DNA unwinding element (DUE), permitting loading of DNA polymerase. After initiation quickly degrades to an ADP-DnaA complex that is not apt for DNA replication. Binds acidic phospholipids. Its function is as follows. Strand separation requires the DnaA boxes and adjacent DnaA-trio motifs as well as ATP. This Enterococcus faecalis (strain ATCC 700802 / V583) protein is Chromosomal replication initiator protein DnaA.